The primary structure comprises 379 residues: Putative 8-amino-7-oxononanoate synthase (379 aa).

R21 provides a ligand contact to substrate. A pyridoxal 5'-phosphate-binding site is contributed by G97–Y98. Residue H122 coordinates substrate. Pyridoxal 5'-phosphate-binding positions include S169, D194–H197, and T223–K226. K226 carries the post-translational modification N6-(pyridoxal phosphate)lysine. Residue T340 participates in substrate binding.

This sequence belongs to the class-II pyridoxal-phosphate-dependent aminotransferase family. BioF subfamily. In terms of assembly, homodimer. Pyridoxal 5'-phosphate serves as cofactor.

It carries out the reaction 6-carboxyhexanoyl-[ACP] + L-alanine + H(+) = (8S)-8-amino-7-oxononanoate + holo-[ACP] + CO2. The protein operates within cofactor biosynthesis; biotin biosynthesis. Its function is as follows. Catalyzes the decarboxylative condensation of pimeloyl-[acyl-carrier protein] and L-alanine to produce 8-amino-7-oxononanoate (AON), [acyl-carrier protein], and carbon dioxide. This chain is Putative 8-amino-7-oxononanoate synthase (bioF), found in Bacillus licheniformis (strain ATCC 14580 / DSM 13 / JCM 2505 / CCUG 7422 / NBRC 12200 / NCIMB 9375 / NCTC 10341 / NRRL NRS-1264 / Gibson 46).